A 358-amino-acid chain; its full sequence is Uroporphyrinogen decarboxylase (358 aa).

Residues 36 to 40 (RQAGR), aspartate 85, tyrosine 160, serine 215, and histidine 338 each bind substrate.

The protein belongs to the uroporphyrinogen decarboxylase family. In terms of assembly, homodimer.

Its subcellular location is the cytoplasm. It carries out the reaction uroporphyrinogen III + 4 H(+) = coproporphyrinogen III + 4 CO2. Its pathway is porphyrin-containing compound metabolism; protoporphyrin-IX biosynthesis; coproporphyrinogen-III from 5-aminolevulinate: step 4/4. Functionally, catalyzes the decarboxylation of four acetate groups of uroporphyrinogen-III to yield coproporphyrinogen-III. This is Uroporphyrinogen decarboxylase from Corynebacterium glutamicum (strain R).